The primary structure comprises 138 residues: Phosphoribosyl-AMP cyclohydrolase (138 aa).

Residue Asp84 coordinates Mg(2+). Residue Cys85 coordinates Zn(2+). Positions 86 and 88 each coordinate Mg(2+). Residues Cys102 and Cys109 each coordinate Zn(2+).

Belongs to the PRA-CH family. As to quaternary structure, homodimer. Requires Mg(2+) as cofactor. The cofactor is Zn(2+).

The protein resides in the cytoplasm. It carries out the reaction 1-(5-phospho-beta-D-ribosyl)-5'-AMP + H2O = 1-(5-phospho-beta-D-ribosyl)-5-[(5-phospho-beta-D-ribosylamino)methylideneamino]imidazole-4-carboxamide. The protein operates within amino-acid biosynthesis; L-histidine biosynthesis; L-histidine from 5-phospho-alpha-D-ribose 1-diphosphate: step 3/9. Its function is as follows. Catalyzes the hydrolysis of the adenine ring of phosphoribosyl-AMP. The chain is Phosphoribosyl-AMP cyclohydrolase from Burkholderia cenocepacia (strain ATCC BAA-245 / DSM 16553 / LMG 16656 / NCTC 13227 / J2315 / CF5610) (Burkholderia cepacia (strain J2315)).